Here is a 349-residue protein sequence, read N- to C-terminus: Ribosomal RNA small subunit methyltransferase C (349 aa).

The protein belongs to the methyltransferase superfamily. RsmC family. As to quaternary structure, monomer.

Its subcellular location is the cytoplasm. It catalyses the reaction guanosine(1207) in 16S rRNA + S-adenosyl-L-methionine = N(2)-methylguanosine(1207) in 16S rRNA + S-adenosyl-L-homocysteine + H(+). In terms of biological role, specifically methylates the guanine in position 1207 of 16S rRNA in the 30S particle. The polypeptide is Ribosomal RNA small subunit methyltransferase C (Psychromonas ingrahamii (strain DSM 17664 / CCUG 51855 / 37)).